We begin with the raw amino-acid sequence, 124 residues long: Large ribosomal subunit protein bL12 (124 aa).

This sequence belongs to the bacterial ribosomal protein bL12 family. Homodimer. Part of the ribosomal stalk of the 50S ribosomal subunit. Forms a multimeric L10(L12)X complex, where L10 forms an elongated spine to which 2 to 4 L12 dimers bind in a sequential fashion. Binds GTP-bound translation factors.

Functionally, forms part of the ribosomal stalk which helps the ribosome interact with GTP-bound translation factors. Is thus essential for accurate translation. The chain is Large ribosomal subunit protein bL12 from Akkermansia muciniphila (strain ATCC BAA-835 / DSM 22959 / JCM 33894 / BCRC 81048 / CCUG 64013 / CIP 107961 / Muc).